The sequence spans 537 residues: Cytochrome P450 4F6 (537 aa).

C468 is a heme binding site.

Belongs to the cytochrome P450 family. The cofactor is heme. High expression in liver and kidney. Lower expression in brain.

The protein resides in the endoplasmic reticulum membrane. It is found in the microsome membrane. It carries out the reaction an organic molecule + reduced [NADPH--hemoprotein reductase] + O2 = an alcohol + oxidized [NADPH--hemoprotein reductase] + H2O + H(+). This Rattus norvegicus (Rat) protein is Cytochrome P450 4F6 (Cyp4f6).